Consider the following 209-residue polypeptide: Ubiquitin-conjugating enzyme E2 S (209 aa).

A UBC core domain is found at 14 to 160 (QTIRQVMREL…ARMMTEIHAQ (147 aa)). The active-site Glycyl thioester intermediate is the Cys98. A disordered region spans residues 165 to 209 (GVGATGDAKDDGGPSTKKHAGLDKKLQDKKKEKLLKEKKRMLKRL). Positions 184 to 199 (AGLDKKLQDKKKEKLL) are enriched in basic and acidic residues. A compositionally biased stretch (basic residues) spans 200-209 (KEKKRMLKRL).

It belongs to the ubiquitin-conjugating enzyme family.

It carries out the reaction S-ubiquitinyl-[E1 ubiquitin-activating enzyme]-L-cysteine + [E2 ubiquitin-conjugating enzyme]-L-cysteine = [E1 ubiquitin-activating enzyme]-L-cysteine + S-ubiquitinyl-[E2 ubiquitin-conjugating enzyme]-L-cysteine.. The protein operates within protein modification; protein ubiquitination. Functionally, catalyzes the covalent attachment of ubiquitin to other proteins. Acts as an essential factor of the anaphase promoting complex/cyclosome (APC/C), a cell cycle-regulated ubiquitin ligase that controls progression through mitosis. Acts by specifically elongating polyubiquitin chains initiated by the E2 enzyme vih/UbcH10 on APC/C substrates, enhancing the degradation of APC/C substrates by the proteasome and promoting mitotic exit. The protein is Ubiquitin-conjugating enzyme E2 S of Drosophila simulans (Fruit fly).